The following is a 116-amino-acid chain: MRVLILLCLFTAFPGILSDVQLQESGPDLVKPSQSLSLTCTVTGYSITSGYSWHWIRQFPGNKLEWMGYIHYSGNTSYNPSLKSRISITRDTSKNQFFLQLNSVTTEDTATYYCAR.

The signal sequence occupies residues 1–18; the sequence is MRVLILLCLFTAFPGILS. The segment at 19-48 is framework-1; the sequence is DVQLQESGPDLVKPSQSLSLTCTVTGYSIT. Residues C40 and C114 are joined by a disulfide bond. The complementarity-determining-1 stretch occupies residues 49–53; it reads SGYSW. The interval 54 to 67 is framework-2; it reads HWIRQFPGNKLEWM. The segment at 68-84 is complementarity-determining-2; that stretch reads GYIHYSGNTSYNPSLKS. Residues 85-116 are framework-3; sequence RISITRDTSKNQFFLQLNSVTTEDTATYYCAR.

This is Ig heavy chain V region 1B43 from Mus musculus (Mouse).